The chain runs to 345 residues: Transcription initiation factor IIB (345 aa).

The TFIIB-type zinc finger occupies 8–40; it reads VGRNCPHCSAVDSLQTDDVMGEVACTACALVVA. Positions 12, 15, 32, and 35 each coordinate Zn(2+). 2 disordered regions span residues 59-89 and 318-345; these read DVDH…HMSS and PTAG…REET. Positions 71-83 are enriched in low complexity; that stretch reads TAATSAAGSLSAA.

This sequence belongs to the TFIIB family. Monomer. Interacts with RNA polymerase II subunits RPB1 and RPB2. Interacts with TBP; the interaction is direct.

It is found in the nucleus. Functionally, specifically binds to the promoter of the spliced leader (SL) RNA gene and thus is essential for SLRNA transcription. This chain is Transcription initiation factor IIB, found in Trypanosoma brucei brucei.